A 252-amino-acid polypeptide reads, in one-letter code: tRNA1(Val) (adenine(37)-N6)-methyltransferase (252 aa).

The protein belongs to the methyltransferase superfamily. tRNA (adenine-N(6)-)-methyltransferase family.

It is found in the cytoplasm. It catalyses the reaction adenosine(37) in tRNA1(Val) + S-adenosyl-L-methionine = N(6)-methyladenosine(37) in tRNA1(Val) + S-adenosyl-L-homocysteine + H(+). Specifically methylates the adenine in position 37 of tRNA(1)(Val) (anticodon cmo5UAC). In Proteus mirabilis (strain HI4320), this protein is tRNA1(Val) (adenine(37)-N6)-methyltransferase.